Here is a 766-residue protein sequence, read N- to C-terminus: Serine/threonine-protein kinase PKH1 (766 aa).

The disordered stretch occupies residues 1–52 (MGNRSLTEADHALLSKPLVPTSAEHTQTQEYPRPFVDGSNSQSGSELQASPQ). A compositionally biased stretch (polar residues) spans 38–52 (GSNSQSGSELQASPQ). A Protein kinase domain is found at 125 to 391 (FKFGEQLGDG…IKQIKAHLFF (267 aa)). Residues 135–137 (SYS) and Lys-154 contribute to the ATP site. Residues 156-201 (LSKEYLIRQKKVKYVTVEKLALQKLNGTKGIFKLFFTFQDEASLYF) are PIF-pocket. ATP contacts are provided by residues 204–206 (EYA) and Asp-210. Asp-249 functions as the Proton acceptor in the catalytic mechanism. ATP contacts are provided by Glu-253 and Asp-267. Phosphoserine is present on residues Ser-294 and Ser-296. The segment covering 476 to 495 (TSQPKLGSKSSTSVRSASNN) has biased composition (polar residues). Disordered regions lie at residues 476–529 (TSQP…NRSR) and 725–745 (PEEG…SSSN). Over residues 511–521 (SVSSPSISTTS) the composition is skewed to low complexity. Over residues 735 to 745 (PTSLQTRSSSN) the composition is skewed to polar residues.

The protein belongs to the protein kinase superfamily. AGC Ser/Thr protein kinase family. PDPK1 subfamily.

It catalyses the reaction L-seryl-[protein] + ATP = O-phospho-L-seryl-[protein] + ADP + H(+). The enzyme catalyses L-threonyl-[protein] + ATP = O-phospho-L-threonyl-[protein] + ADP + H(+). In terms of biological role, activates YPK1 by phosphorylating of a threonine residue. In Saccharomyces cerevisiae (strain ATCC 204508 / S288c) (Baker's yeast), this protein is Serine/threonine-protein kinase PKH1 (PKH1).